A 323-amino-acid chain; its full sequence is tRNA dimethylallyltransferase (323 aa).

12–19 (GPTASGKT) contributes to the ATP binding site. A substrate-binding site is contributed by 14–19 (TASGKT). Interaction with substrate tRNA stretches follow at residues 37–40 (DSAL) and 161–165 (QRLVR).

The protein belongs to the IPP transferase family. As to quaternary structure, monomer. Mg(2+) is required as a cofactor.

The catalysed reaction is adenosine(37) in tRNA + dimethylallyl diphosphate = N(6)-dimethylallyladenosine(37) in tRNA + diphosphate. Catalyzes the transfer of a dimethylallyl group onto the adenine at position 37 in tRNAs that read codons beginning with uridine, leading to the formation of N6-(dimethylallyl)adenosine (i(6)A). This Azotobacter vinelandii (strain DJ / ATCC BAA-1303) protein is tRNA dimethylallyltransferase.